The sequence spans 262 residues: (2Z,6E)-farnesyl diphosphate synthase (262 aa).

D40 is a catalytic residue. D40 contributes to the Mg(2+) binding site. Residues 41–44 (GNRR), W45, and 86–88 (STE) each bind substrate. The Proton acceptor role is filled by N89. Residues R92, R211, and 217–219 (RLS) each bind substrate. E230 is a Mg(2+) binding site.

This sequence belongs to the UPP synthase family. Z-FPP synthase subfamily. As to quaternary structure, homodimer. Mg(2+) is required as a cofactor.

It is found in the cytoplasm. It localises to the cell membrane. The enzyme catalyses isopentenyl diphosphate + (2E)-geranyl diphosphate = (2Z,6E)-farnesyl diphosphate + diphosphate. Catalyzes the condensation of only one isopentenyl pyrophosphate (IPP) unit in the cis configuration to E-geranyl diphosphate (E-GPP) generating the 15 carbon product (2Z,6E)-farnesyl diphosphate (Z-FPP or EZ-FPP). Z-FPP is the precursor of decaprenyl diphosphate, which has a central role in the biosynthesis of the mycobacterial cell wall. This chain is (2Z,6E)-farnesyl diphosphate synthase, found in Mycobacterium tuberculosis (strain CDC 1551 / Oshkosh).